The primary structure comprises 505 residues: MPQALERADGSWAWVVLLATMVTQGLTLGFPTCIGIFFTELQWEFQASNSETSWFPSILTAVLHMAGPLCSILVGRFGCRVTVMLGGVLASLGMVASSFSHNLSQLYFTAGFITGLGMCFSFQSSITVLGFYFVRRRVLANALASMGVSLGITLWPLLSRYLLENLGWRGTFLVFGGIFLHCCICGAIIRPVATSVAPETKECPPPPPETPALGCLAACGRTIQRHLAFDILRHNTGYCVYILGVMWSVLGFPLPQVFLVPYAMWHSVDEQQAALLISIIGFSNIFLRPLAGLMAGRPAFASHRKYLFSLALLLNGLTNLVCAASGDFWVLVGYCLAYSVSMSGIGALIFQVLMDIVPMDQFPRALGLFTVLDGLAFLISPPLAGLLLDATNNFSYVFYMSSFFLISAALFMGGSFYALQKKEQGKQAVAADALERDLFLEAKDGPGKQRSPEIMCQSSRQPRPAGVNKHLWGCPASSRTSHEWLLWPKAVLQAKQTALGWNSPT.

Residues 1–17 (MPQALERADGSWAWVVL) lie on the Cytoplasmic side of the membrane. The chain crosses the membrane as a helical span at residues 18–38 (LATMVTQGLTLGFPTCIGIFF). Topologically, residues 39-53 (TELQWEFQASNSETS) are extracellular. A helical membrane pass occupies residues 54–74 (WFPSILTAVLHMAGPLCSILV). Over 75 to 80 (GRFGCR) the chain is Cytoplasmic. The chain crosses the membrane as a helical span at residues 81–101 (VTVMLGGVLASLGMVASSFSH). Topologically, residues 102-110 (NLSQLYFTA) are extracellular. The chain crosses the membrane as a helical span at residues 111–131 (GFITGLGMCFSFQSSITVLGF). At 132–137 (YFVRRR) the chain is on the cytoplasmic side. Residues 138 to 158 (VLANALASMGVSLGITLWPLL) traverse the membrane as a helical segment. Over 159–171 (SRYLLENLGWRGT) the chain is Extracellular. A helical transmembrane segment spans residues 172 to 192 (FLVFGGIFLHCCICGAIIRPV). Residues 193-239 (ATSVAPETKECPPPPPETPALGCLAACGRTIQRHLAFDILRHNTGYC) lie on the Cytoplasmic side of the membrane. Residues 240-260 (VYILGVMWSVLGFPLPQVFLV) traverse the membrane as a helical segment. Topologically, residues 261 to 274 (PYAMWHSVDEQQAA) are extracellular. Residues 275–295 (LLISIIGFSNIFLRPLAGLMA) form a helical membrane-spanning segment. The Cytoplasmic segment spans residues 296 to 305 (GRPAFASHRK). A helical transmembrane segment spans residues 306 to 326 (YLFSLALLLNGLTNLVCAASG). Topologically, residues 327-329 (DFW) are extracellular. Residues 330-350 (VLVGYCLAYSVSMSGIGALIF) traverse the membrane as a helical segment. Topologically, residues 351 to 367 (QVLMDIVPMDQFPRALG) are cytoplasmic. Residues 368–388 (LFTVLDGLAFLISPPLAGLLL) form a helical membrane-spanning segment. At 389–396 (DATNNFSY) the chain is on the extracellular side. Residues 397–417 (VFYMSSFFLISAALFMGGSFY) traverse the membrane as a helical segment. Residues 418–505 (ALQKKEQGKQ…QTALGWNSPT (88 aa)) are Cytoplasmic-facing. A disordered region spans residues 443-464 (KDGPGKQRSPEIMCQSSRQPRP).

It belongs to the major facilitator superfamily. Monocarboxylate porter (TC 2.A.1.13) family. Highly expressed in kidney.

It localises to the cell membrane. Its function is as follows. Proton-linked monocarboxylate transporter. Catalyzes the rapid transport across the plasma membrane of many monocarboxylates such as lactate, pyruvate, branched-chain oxo acids derived from leucine, valine and isoleucine, and the ketone bodies acetoacetate, beta-hydroxybutyrate and acetate. The protein is Monocarboxylate transporter 6 (SLC16A5) of Homo sapiens (Human).